The chain runs to 774 residues: Formin-like protein 13 (774 aa).

The N-terminal stretch at 1 to 22 is a signal peptide; it reads MRRRVALSTAIALLVGAQLCVA. The span at 51–67 shows a compositional bias: pro residues; that stretch reads PPPPMSGSEAVPPPPPA. A disordered region spans residues 51-78; sequence PPPPMSGSEAVPPPPPAAAASATTGGGR. The span at 68–78 shows a compositional bias: low complexity; the sequence is AAASATTGGGR. A helical transmembrane segment spans residues 89-109; the sequence is IALSAGLVALAVASYSCCLLL. 4 disordered regions span residues 130-163, 176-338, 374-402, and 740-774; these read AAAA…DAIY, HEKS…HLKP, FLNS…RRLL, and GSGK…SSSS. Over residues 194 to 216 the composition is skewed to pro residues; that stretch reads DLRPLPPLKRPESQPPPPPPSTP. Low complexity predominate over residues 242-261; that stretch reads SSFSRSTSQHSTLEQTAMPP. A compositionally biased stretch (pro residues) spans 262–286; it reads MAAPAPPQTNPPRPVRPPPPPPPPR. One can recognise an FH2 domain in the interval 326-749; that stretch reads GAARPPKPPH…GSGKSFRVPA (424 aa).

This sequence belongs to the formin-like family. Class-I subfamily.

Its subcellular location is the membrane. The chain is Formin-like protein 13 (FH13) from Oryza sativa subsp. japonica (Rice).